Consider the following 264-residue polypeptide: 3-deoxy-manno-octulosonate cytidylyltransferase (264 aa).

It belongs to the KdsB family.

Its subcellular location is the cytoplasm. The enzyme catalyses 3-deoxy-alpha-D-manno-oct-2-ulosonate + CTP = CMP-3-deoxy-beta-D-manno-octulosonate + diphosphate. It functions in the pathway nucleotide-sugar biosynthesis; CMP-3-deoxy-D-manno-octulosonate biosynthesis; CMP-3-deoxy-D-manno-octulosonate from 3-deoxy-D-manno-octulosonate and CTP: step 1/1. It participates in bacterial outer membrane biogenesis; lipopolysaccharide biosynthesis. Activates KDO (a required 8-carbon sugar) for incorporation into bacterial lipopolysaccharide in Gram-negative bacteria. The protein is 3-deoxy-manno-octulosonate cytidylyltransferase of Marinomonas sp. (strain MWYL1).